The following is a 201-amino-acid chain: E3 ubiquitin-protein ligase MIR1 (201 aa).

An RING-CH-type zinc finger spans residues 1 to 58; it reads MDSTGEFCWICHQPEGPLKRFCGCKGSCAVSHQDCLRGWLETSRRQTCALCGTPYSMK. The Cytoplasmic portion of the chain corresponds to 1-81; it reads MDSTGEFCWI…EEVLAAMEAC (81 aa). Zn(2+)-binding residues include Cys8, Cys11, Cys22, Cys24, His32, Cys35, Cys48, and Cys51. The tract at residues 52-79 is DIRT; sequence GTPYSMKWKTKPLREWTWGEEEVLAAME. The chain crosses the membrane as a helical span at residues 82-102; it reads LPLVLIPLAVLMIVMGTWLLV. The Extracellular portion of the chain corresponds to 103–113; the sequence is NHNGFLSPRMQ. The helical transmembrane segment at 114–134 threads the bilayer; that stretch reads VVLVVIVLLAMIVFSASASYV. Residues 135-201 lie on the Cytoplasmic side of the membrane; sequence MVEGPGCLDT…RLGCVRLCCV (67 aa).

Interacts with host UBE2J2.

It localises to the host endoplasmic reticulum membrane. It carries out the reaction [E2 ubiquitin-conjugating enzyme]-S-ubiquitinyl-L-cysteine + [acceptor protein]-L-cysteine = [E2 ubiquitin-conjugating enzyme]-L-cysteine + [acceptor protein]-S-ubiquitinyl-L-cysteine.. Its pathway is protein modification; protein ubiquitination. In terms of biological role, E3 ubiquitin-protein ligase that mediates ubiquitination of host surface class I (MHC-I) H-2D(b)/H2-D1 and H-2K(b)/H2-K1 molecules before they exit the endoplasmic reticulum, leading to their degradation by the endoplasmic reticulum-associated degradation (ERAD) system, thus blocking the immune detection of virus-infected cells. Mediates ubiquitination of lysine, as well as serine and threonine residues present in the cytoplasmic tail of surface class I molecules. Promotes ubiquitination of hydroxylated serine or threonine residues via ester bonds instead of the classical isopeptide linkage. The sequence is that of E3 ubiquitin-protein ligase MIR1 (K3) from Murid herpesvirus 4 (MuHV-4).